The primary structure comprises 422 residues: Tyrosine--tRNA ligase (422 aa).

Residue Tyr-35 participates in L-tyrosine binding. The 'HIGH' region signature appears at 40–49 (PTADSLHIGH). Positions 170 and 174 each coordinate L-tyrosine. The short motif at 232 to 236 (KFGKT) is the 'KMSKS' region element. ATP is bound at residue Lys-235. An S4 RNA-binding domain is found at 355-421 (LTLVDLLVES…GKKKYFLVTY (67 aa)).

It belongs to the class-I aminoacyl-tRNA synthetase family. TyrS type 1 subfamily. Homodimer.

Its subcellular location is the cytoplasm. It catalyses the reaction tRNA(Tyr) + L-tyrosine + ATP = L-tyrosyl-tRNA(Tyr) + AMP + diphosphate + H(+). Functionally, catalyzes the attachment of tyrosine to tRNA(Tyr) in a two-step reaction: tyrosine is first activated by ATP to form Tyr-AMP and then transferred to the acceptor end of tRNA(Tyr). This Bacillus pumilus (strain SAFR-032) protein is Tyrosine--tRNA ligase.